The chain runs to 479 residues: Glutamyl-tRNA reductase (479 aa).

Residues 49–52, Ser109, 114–116, and Gln120 each bind substrate; these read TCNR and EQQ. The Nucleophile role is filled by Cys50. 191 to 196 contributes to the NADP(+) binding site; that stretch reads GAGSMG.

It belongs to the glutamyl-tRNA reductase family. Homodimer.

It catalyses the reaction (S)-4-amino-5-oxopentanoate + tRNA(Glu) + NADP(+) = L-glutamyl-tRNA(Glu) + NADPH + H(+). It participates in porphyrin-containing compound metabolism; protoporphyrin-IX biosynthesis; 5-aminolevulinate from L-glutamyl-tRNA(Glu): step 1/2. In terms of biological role, catalyzes the NADPH-dependent reduction of glutamyl-tRNA(Glu) to glutamate 1-semialdehyde (GSA). This Rhodococcus jostii (strain RHA1) protein is Glutamyl-tRNA reductase.